We begin with the raw amino-acid sequence, 112 residues long: Large ribosomal subunit protein bL21 (112 aa).

It belongs to the bacterial ribosomal protein bL21 family. Part of the 50S ribosomal subunit. Contacts protein L20.

Functionally, this protein binds to 23S rRNA in the presence of protein L20. This Buchnera aphidicola subsp. Baizongia pistaciae (strain Bp) protein is Large ribosomal subunit protein bL21.